We begin with the raw amino-acid sequence, 156 residues long: Small ribosomal subunit protein uS7 (156 aa).

It belongs to the universal ribosomal protein uS7 family. Part of the 30S ribosomal subunit. Contacts proteins S9 and S11.

Functionally, one of the primary rRNA binding proteins, it binds directly to 16S rRNA where it nucleates assembly of the head domain of the 30S subunit. Is located at the subunit interface close to the decoding center, probably blocks exit of the E-site tRNA. The protein is Small ribosomal subunit protein uS7 of Dictyoglomus turgidum (strain DSM 6724 / Z-1310).